The chain runs to 988 residues: MTTEVGSASEVKKGSDQAGADASKEKAKEVENEQTPVSEPEEEKGSQPGPPVERQSTPRLRKRGKDPSENRGISRFIPPWLKKQRSYNLVVAKDGGDKKEPTQADVEDQILGKEESLPEEESRAKGDAEEMAQRKHLEVQVEVREAKPALKSSVETQPAEEVRKDKEETIQDTQEEKLEGGAAKRETKEVQTSELKAEVASQKATKKTKTVLAKVTLLDGTEYSCDLEKRAKGQVLFDRVCEHLNLLEKDYFGLLFQDHPEQKNWLDPAKEIKRQLKNLPWLFTFNVKFYPPDPSQLTEDITRYFLCLQLRQDIASGRLPCSFVTHALLGSYTLQAEHGDYDPEEYDSIDLGDFQFAPAHTKELEEKVSELHKTHRGLSPAQADSQFLENAKRLSMYGVDLHHAKDSEGVDIKLGVCANGLLIYKDRLRINRFAWPKILKISYKRSNFYIKVRPAELEQFESTIGFKLPNHRAAKRLWKVCVEHHTFYRLVSPEQPPKTKFLTLGSKFRYSGRTQAQTREASTLIDRPAPQFERASSKRVSRSLDGAPIGVVDQSPPGEGSVPGPGVISYTTIQDGRRDSKSPTKATPLPAEGKKNTLRVDGDNIYVRHSNLMLEDLDKAQEAILKHQASISELKRNFMASTPEPRPSEWEKRRVTPLPFQPQASSHETLNVVEEKKRAEVGKDESVITEEMNGKEMSPGHGPGETRKVEPVAHKDSTSLSSESSSSSSESEEDVGEYQPHHRVTEGTIREEQEECDEELEEEPGQGAKVVEREAAVPDAVPDRQAGASVLPVETEAQEHVVAQKLPGEKGAHGGTAEQDPREEAEEDPHRVNGEVPHLDLDGLPEIICCSEPPVVKTEMVTISDASQRTEISTKEVPIVQTETKTITYESPQIDGGAGGDSGVLLTAQTITSESASTTTTTHITKTVKGGISETRIEKRIVITGDAALDHDQALAQAIREAREQHPDMSVTRVVVHKETELAEEGEE.

Residues 1–190 (MTTEVGSASE…GAAKRETKEV (190 aa)) form a disordered region. An N-acetylthreonine modification is found at T2. Phosphoserine is present on S7. Over residues 22 to 31 (ASKEKAKEVE) the composition is skewed to basic and acidic residues. Phosphoserine is present on residues S38, S86, and S116. Basic and acidic residues-rich tracts occupy residues 110-148 (ILGK…EAKP) and 160-190 (EEVR…TKEV). A phosphoserine mark is found at S201, S379, S395, S492, S543, S555, S561, and S582. An FERM domain is found at 211–492 (VLAKVTLLDG…EHHTFYRLVS (282 aa)). A hydrophilic region spans residues 495–651 (QPPKTKFLTL…TPEPRPSEWE (157 aa)). The tract at residues 514-594 (TQAQTREAST…KATPLPAEGK (81 aa)) is disordered. A compositionally biased stretch (low complexity) spans 555-567 (SPPGEGSVPGPGV). Y606 carries the phosphotyrosine modification. A phosphoserine mark is found at S610 and S630. 2 disordered regions span residues 639–788 (MAST…QAGA) and 804–839 (QKLP…VPHL). Residues 652–837 (KRRVTPLPFQ…DPHRVNGEVP (186 aa)) form a spectrin--actin-binding region. A compositionally biased stretch (basic and acidic residues) spans 673–686 (VEEKKRAEVGKDES). Position 698 is a phosphoserine (S698). Residues 704 to 717 (GETRKVEPVAHKDS) show a composition bias toward basic and acidic residues. Residues 718–729 (TSLSSESSSSSS) show a composition bias toward low complexity. Basic and acidic residues predominate over residues 739–751 (QPHHRVTEGTIRE). T745 carries the phosphothreonine modification. Acidic residues predominate over residues 752–764 (EQEECDEELEEEP). Positions 828–839 (DPHRVNGEVPHL) are enriched in basic and acidic residues. The tract at residues 838–988 (HLDLDGLPEI…ETELAEEGEE (151 aa)) is C-terminal (CTD).

In terms of assembly, interacts with FCGR1A. Interacts with TRPC4. Interacts (via CTD domain) with FKBP2. Interacts with NUMA1; this interaction is negatively regulated by CDK1 during metaphase and promotes anaphase-specific localization of NUMA1 in symmetrically dividing cells. Widely expressed.

Its subcellular location is the cytoplasm. The protein localises to the cytoskeleton. It is found in the cell cortex. It localises to the cell membrane. Functionally, required for dynein-dynactin complex and NUMA1 recruitment at the mitotic cell cortex during anaphase. The polypeptide is Band 4.1-like protein 2 (Mus musculus (Mouse)).